A 139-amino-acid chain; its full sequence is von Hippel-Lindau-like protein (139 aa).

Positions 1–22 (MPWRAGNGVGLEAQAGTQEAGP) are disordered. Positions 54 to 135 (SRIIICNHSP…GQPVFANITL (82 aa)) are beta-domain.

The protein belongs to the VHL family. Interacts via the beta domain with the ODD domain of HIF1A. This interaction is independent of prolyl hydroxylation of HIF1A. Abundantly expressed in the placenta.

Functionally, functions as a dominant-negative VHL to serve as a protector of HIFalpha. The sequence is that of von Hippel-Lindau-like protein (VHLL) from Homo sapiens (Human).